The primary structure comprises 211 residues: Endo-1,4-beta-xylanase 4 (211 aa).

The signal sequence occupies residues 1-16 (MKVTAAFAGLLVTAFA). A GH11 domain is found at 19-210 (VPEPVLVSRS…GACSASVTIS (192 aa)). An N-linked (GlcNAc...) asparagine glycan is attached at Asn101. Glu106 functions as the Nucleophile in the catalytic mechanism. Catalysis depends on Glu197, which acts as the Proton donor.

It belongs to the glycosyl hydrolase 11 (cellulase G) family.

The protein resides in the secreted. It carries out the reaction Endohydrolysis of (1-&gt;4)-beta-D-xylosidic linkages in xylans.. Its pathway is glycan degradation; xylan degradation. Endo-1,4-beta-xylanase involved in the hydrolysis of xylan, a major structural heterogeneous polysaccharide found in plant biomass representing the second most abundant polysaccharide in the biosphere, after cellulose. This Aspergillus niger protein is Endo-1,4-beta-xylanase 4 (XYN4).